The primary structure comprises 352 residues: Ion-translocating oxidoreductase complex subunit D (352 aa).

4 consecutive transmembrane segments (helical) span residues 20–40 (IMLL…WFFG), 42–62 (GTLV…ALVL), 89–109 (IPPL…AIIA), and 123–143 (PAMI…TSWL). Position 187 is an FMN phosphoryl threonine (T187). Transmembrane regions (helical) follow at residues 214-234 (ILAG…GLWL), 242-262 (WHIP…GWLF), 267-287 (LAAP…FFIL), 301-321 (LIFG…GGYP), and 322-342 (DGVA…DYYT).

This sequence belongs to the NqrB/RnfD family. The complex is composed of six subunits: RsxA, RsxB, RsxC, RsxD, RsxE and RsxG. The cofactor is FMN.

The protein localises to the cell inner membrane. Its function is as follows. Part of a membrane-bound complex that couples electron transfer with translocation of ions across the membrane. Required to maintain the reduced state of SoxR. The sequence is that of Ion-translocating oxidoreductase complex subunit D from Escherichia coli (strain ATCC 8739 / DSM 1576 / NBRC 3972 / NCIMB 8545 / WDCM 00012 / Crooks).